The primary structure comprises 283 residues: ATP phosphoribosyltransferase (283 aa).

Belongs to the ATP phosphoribosyltransferase family. Long subfamily. Mg(2+) serves as cofactor.

The protein resides in the cytoplasm. It catalyses the reaction 1-(5-phospho-beta-D-ribosyl)-ATP + diphosphate = 5-phospho-alpha-D-ribose 1-diphosphate + ATP. The protein operates within amino-acid biosynthesis; L-histidine biosynthesis; L-histidine from 5-phospho-alpha-D-ribose 1-diphosphate: step 1/9. Feedback inhibited by histidine. Catalyzes the condensation of ATP and 5-phosphoribose 1-diphosphate to form N'-(5'-phosphoribosyl)-ATP (PR-ATP). Has a crucial role in the pathway because the rate of histidine biosynthesis seems to be controlled primarily by regulation of HisG enzymatic activity. This chain is ATP phosphoribosyltransferase, found in Rhodococcus opacus (strain B4).